Reading from the N-terminus, the 121-residue chain is Large ribosomal subunit protein uL18 (121 aa).

A compositionally biased stretch (basic residues) spans 1-19 (MASKKVQKIRDKRKARVRA). Residues 1–23 (MASKKVQKIRDKRKARVRAKISG) form a disordered region.

It belongs to the universal ribosomal protein uL18 family. In terms of assembly, part of the 50S ribosomal subunit; part of the 5S rRNA/L5/L18/L25 subcomplex. Contacts the 5S and 23S rRNAs.

Its function is as follows. This is one of the proteins that bind and probably mediate the attachment of the 5S RNA into the large ribosomal subunit, where it forms part of the central protuberance. This Syntrophus aciditrophicus (strain SB) protein is Large ribosomal subunit protein uL18.